A 141-amino-acid chain; its full sequence is Nucleoside triphosphatase NudI (141 aa).

A Nudix hydrolase domain is found at 1–141 (MRQRTIVCPL…RKTLSLKGLL (141 aa)). Residues 38-59 (GGVEPGERIEDALRREIREELG) carry the Nudix box motif.

This sequence belongs to the Nudix hydrolase family. NudI subfamily. Monomer. Mg(2+) is required as a cofactor.

It carries out the reaction a ribonucleoside 5'-triphosphate + H2O = a ribonucleoside 5'-phosphate + diphosphate + H(+). The enzyme catalyses a 2'-deoxyribonucleoside 5'-triphosphate + H2O = a 2'-deoxyribonucleoside 5'-phosphate + diphosphate + H(+). The catalysed reaction is dUTP + H2O = dUMP + diphosphate + H(+). It catalyses the reaction dTTP + H2O = dTMP + diphosphate + H(+). It carries out the reaction dCTP + H2O = dCMP + diphosphate + H(+). Catalyzes the hydrolysis of nucleoside triphosphates, with a preference for pyrimidine deoxynucleoside triphosphates (dUTP, dTTP and dCTP). The protein is Nucleoside triphosphatase NudI of Escherichia fergusonii (strain ATCC 35469 / DSM 13698 / CCUG 18766 / IAM 14443 / JCM 21226 / LMG 7866 / NBRC 102419 / NCTC 12128 / CDC 0568-73).